The following is a 248-amino-acid chain: 2,3-bisphosphoglycerate-dependent phosphoglycerate mutase (248 aa).

Substrate is bound by residues 8–15 (RHGESTWN), 21–22 (TG), R60, 87–90 (ERHY), K98, 114–115 (RR), and 183–184 (GN). H9 serves as the catalytic Tele-phosphohistidine intermediate. E87 serves as the catalytic Proton donor/acceptor.

This sequence belongs to the phosphoglycerate mutase family. BPG-dependent PGAM subfamily. As to quaternary structure, homodimer.

The enzyme catalyses (2R)-2-phosphoglycerate = (2R)-3-phosphoglycerate. Its pathway is carbohydrate degradation; glycolysis; pyruvate from D-glyceraldehyde 3-phosphate: step 3/5. In terms of biological role, catalyzes the interconversion of 2-phosphoglycerate and 3-phosphoglycerate. This chain is 2,3-bisphosphoglycerate-dependent phosphoglycerate mutase, found in Cupriavidus pinatubonensis (strain JMP 134 / LMG 1197) (Cupriavidus necator (strain JMP 134)).